We begin with the raw amino-acid sequence, 432 residues long: Keratin, type I cytoskeletal 17 (432 aa).

The disordered stretch occupies residues M1–S24. The tract at residues M1–G83 is head. Residues S12 and S13 each carry the phosphoserine modification. Residue K15 forms a Glycyl lysine isopeptide (Lys-Gly) (interchain with G-Cter in SUMO1); alternate linkage. A Glycyl lysine isopeptide (Lys-Gly) (interchain with G-Cter in SUMO2); alternate cross-link involves residue K15. Phosphoserine occurs at positions 25, 32, and 39. Phosphoserine; by RPS6KA1 is present on S44. The interval E84–Y120 is coil 1A. The 312-residue stretch at E84–L395 folds into the IF rod domain. The segment at V102–I116 is peptide epitope S1; induces T-cell and keratinocyte proliferation and IFN-gamma production. Phosphothreonine is present on T110. The interval Q121 to I138 is linker 1. Residues E139–R230 form a coil 1B region. Residues A153–D167 form a peptide epitope S2; induces T-cell proliferation and IFN-gamma production region. The tract at residues G231–S250 is linker 12. The interval R251–D392 is coil 2. Residue K278 forms a Glycyl lysine isopeptide (Lys-Gly) (interchain with G-Cter in SUMO2) linkage. T279 carries the post-translational modification Phosphothreonine. S323 is subject to Phosphoserine. Residues E332 to I346 are peptide epitope S4; induces T-cell and keratinocyte proliferation and IFN-gamma production. The segment at A393–R432 is tail. Residues K399, K400, and K419 each participate in a glycyl lysine isopeptide (Lys-Gly) (interchain with G-Cter in SUMO1); alternate cross-link. Glycyl lysine isopeptide (Lys-Gly) (interchain with G-Cter in SUMO2); alternate cross-links involve residues K399, K400, and K419.

Belongs to the intermediate filament family. In terms of assembly, heterodimer of a type I and a type II keratin. KRT17 associates with KRT6 isomers (KRT6A or KRT6B). Interacts with TRADD and SFN. Post-translationally, phosphorylation at Ser-44 occurs in a growth- and stress-dependent fashion in skin keratinocytes, it has no effect on filament organization. Expressed in the outer root sheath and medulla region of hair follicle specifically from eyebrow and beard, digital pulp, nail matrix and nail bed epithelium, mucosal stratified squamous epithelia and in basal cells of oral epithelium, palmoplantar epidermis and sweat and mammary glands. Also expressed in myoepithelium of prostate, basal layer of urinary bladder, cambial cells of sebaceous gland and in exocervix (at protein level).

The protein localises to the cytoplasm. In terms of biological role, type I keratin involved in the formation and maintenance of various skin appendages, specifically in determining shape and orientation of hair. Required for the correct growth of hair follicles, in particular for the persistence of the anagen (growth) state. Modulates the function of TNF-alpha in the specific context of hair cycling. Regulates protein synthesis and epithelial cell growth through binding to the adapter protein SFN and by stimulating Akt/mTOR pathway. Involved in tissue repair. May be a marker of basal cell differentiation in complex epithelia and therefore indicative of a certain type of epithelial 'stem cells'. Acts as a promoter of epithelial proliferation by acting a regulator of immune response in skin: promotes Th1/Th17-dominated immune environment contributing to the development of basaloid skin tumors. May act as an autoantigen in the immunopathogenesis of psoriasis, with certain peptide regions being a major target for autoreactive T-cells and hence causing their proliferation. The chain is Keratin, type I cytoskeletal 17 (KRT17) from Homo sapiens (Human).